The primary structure comprises 324 residues: Glyoxylate/hydroxypyruvate reductase B (324 aa).

Active-site residues include Arg-237 and Glu-266. The active-site Proton donor is His-285.

The protein belongs to the D-isomer specific 2-hydroxyacid dehydrogenase family. GhrB subfamily. In terms of assembly, homodimer.

It is found in the cytoplasm. It catalyses the reaction glycolate + NADP(+) = glyoxylate + NADPH + H(+). The catalysed reaction is (R)-glycerate + NAD(+) = 3-hydroxypyruvate + NADH + H(+). It carries out the reaction (R)-glycerate + NADP(+) = 3-hydroxypyruvate + NADPH + H(+). Functionally, catalyzes the NADPH-dependent reduction of glyoxylate and hydroxypyruvate into glycolate and glycerate, respectively. The protein is Glyoxylate/hydroxypyruvate reductase B of Escherichia coli O6:K15:H31 (strain 536 / UPEC).